A 554-amino-acid polypeptide reads, in one-letter code: D-3-phosphoglycerate dehydrogenase (554 aa).

Residues 177–178, Asp197, 256–258, and Asp282 each bind NAD(+); these read KI and CSR. Arg258 is a catalytic residue. Residue Glu287 is part of the active site. Residue His305 is the Proton donor of the active site. 305–308 contributes to the NAD(+) binding site; it reads HLGA. Positions 482–554 constitute an ACT domain; the sequence is MLFTLHRDMP…GIRDAYTVKL (73 aa).

Belongs to the D-isomer specific 2-hydroxyacid dehydrogenase family.

It carries out the reaction (2R)-3-phosphoglycerate + NAD(+) = 3-phosphooxypyruvate + NADH + H(+). It catalyses the reaction (R)-2-hydroxyglutarate + NAD(+) = 2-oxoglutarate + NADH + H(+). The protein operates within amino-acid biosynthesis; L-serine biosynthesis; L-serine from 3-phospho-D-glycerate: step 1/3. In terms of biological role, catalyzes the reversible oxidation of 3-phospho-D-glycerate to 3-phosphonooxypyruvate, the first step of the phosphorylated L-serine biosynthesis pathway. Also catalyzes the reversible oxidation of 2-hydroxyglutarate to 2-oxoglutarate. The chain is D-3-phosphoglycerate dehydrogenase (serA) from Synechocystis sp. (strain ATCC 27184 / PCC 6803 / Kazusa).